Here is a 191-residue protein sequence, read N- to C-terminus: uncharacterized protein (191 aa).

The tract at residues 52–112 (NKQENQTESS…TNKDTNIETN (61 aa)) is disordered. A compositionally biased stretch (polar residues) spans 57-70 (QTESSDLNNTDSLV). Over residues 71 to 94 (DSNSDNQTNTTDTSTNNVENLNEN) the composition is skewed to low complexity. A coiled-coil region spans residues 138 to 172 (QDKISDTERIRFLEEKVSKLERKIRTLSLQMTKIS).

This is an uncharacterized protein from Acanthamoeba polyphaga mimivirus (APMV).